The following is a 350-amino-acid chain: uncharacterized protein (350 aa).

Residues 171–334 (PTVVIAGYPN…LKERLKKIAI (164 aa)) enclose the OBG-type G domain. Residues 177–184 (GYPNVGKS), 219–223 (DTPGL), and 286–289 (NKID) each bind GTP.

This sequence belongs to the TRAFAC class OBG-HflX-like GTPase superfamily. OBG GTPase family. NOG subfamily.

This is an uncharacterized protein from Methanocaldococcus jannaschii (strain ATCC 43067 / DSM 2661 / JAL-1 / JCM 10045 / NBRC 100440) (Methanococcus jannaschii).